Consider the following 526-residue polypeptide: MPSLRRLLPFLAAGSAALASQDTFQGKCTGFADKINLPNVRVNFVNYVPGGTNLSLPDNPTSCGTTSQVVSEDVCRIAMAVATSNSSEITLEAWLPQNYTGRFLSTGNGGLSGCIQYYDLAYTSGLGFATVGANSGHNGTSGEPFYHHPEVLEDFVHRSVHTGVVVGKQLTKLFYEEGFKKSYYLGCSTGGRQGFKSVQKYPNDFDGVVAGAPAFNMINLMSWSAHFYSITGPVGSDTYLSPDLWNITHKEILRQCDGIDGAEDGIIEDPSLCSPVLEAIICKPGQNTTECLTGKQAHTVREIFSPLYGVNGTLLYPRMQPGSEVMASSIMYNGQPFQYSADWYRYVVYENPNWDATKFSVRDAAVALKQNPFNLQTWDADISSFRKAGGKVLTYHGLMDQLISSENSKLYYARVAETMNVPPEELDEFYRFFQISGMAHCSGGDGAYGIGNQLVTYNDANPENNVLMAMVQWVEKGIAPETIRGAKFTNGTGSAVEYTRKHCRYPRRNVYKGPGNYTDENAWQCV.

Residues 1 to 19 form the signal peptide; sequence MPSLRRLLPFLAAGSAALA. 2 disulfides stabilise this stretch: cysteine 28–cysteine 75 and cysteine 63–cysteine 114. Asparagine 53, asparagine 85, asparagine 98, and asparagine 138 each carry an N-linked (GlcNAc...) asparagine glycan. Disulfide bonds link cysteine 187-cysteine 441, cysteine 256-cysteine 273, and cysteine 282-cysteine 291. The active-site Acyl-ester intermediate is the serine 188. Asparagine 246 is a glycosylation site (N-linked (GlcNAc...) asparagine). Residues aspartate 257, aspartate 260, alanine 262, aspartate 264, and isoleucine 266 each contribute to the Ca(2+) site. 2 N-linked (GlcNAc...) asparagine glycosylation sites follow: asparagine 287 and asparagine 311. Residues aspartate 400 and histidine 440 each act as charge relay system in the active site. Residues asparagine 490 and asparagine 516 are each glycosylated (N-linked (GlcNAc...) asparagine). The cysteines at positions 503 and 525 are disulfide-linked.

It belongs to the tannase family.

It is found in the secreted. The catalysed reaction is feruloyl-polysaccharide + H2O = ferulate + polysaccharide.. Involved in degradation of plant cell walls. Hydrolyzes the feruloyl-arabinose ester bond in arabinoxylans as well as the feruloyl-galactose and feruloyl-arabinose ester bonds in pectin. This is Probable feruloyl esterase B-2 (faeB-2) from Aspergillus oryzae (strain ATCC 42149 / RIB 40) (Yellow koji mold).